The following is a 377-amino-acid chain: Nitric oxide reductase FlRd-NAD(+) reductase (377 aa).

Belongs to the FAD-dependent oxidoreductase family. The cofactor is FAD.

It localises to the cytoplasm. The enzyme catalyses 2 reduced [nitric oxide reductase rubredoxin domain] + NAD(+) + H(+) = 2 oxidized [nitric oxide reductase rubredoxin domain] + NADH. Its pathway is nitrogen metabolism; nitric oxide reduction. Functionally, one of at least two accessory proteins for anaerobic nitric oxide (NO) reductase. Reduces the rubredoxin moiety of NO reductase. This chain is Nitric oxide reductase FlRd-NAD(+) reductase, found in Escherichia coli O17:K52:H18 (strain UMN026 / ExPEC).